The primary structure comprises 7354 residues: Microtubule-actin cross-linking factor 1, isoforms 1/2/3/4 (7354 aa).

The tract at residues 1–47 (MSSSDEETLSERSCRSERSCRSERSYRSERSGSLSPCPPGDTLPWNL) is disordered. An actin-binding region spans residues 1-295 (MSSSDEETLS…VITYVSSIYD (295 aa)). A Phosphoserine modification is found at S4. Residues 9–30 (LSERSCRSERSCRSERSYRSER) are compositionally biased toward basic and acidic residues. S35 bears the Phosphoserine mark. T42 bears the Phosphothreonine mark. S57 carries the phosphoserine modification. Calponin-homology (CH) domains lie at 78–181 (RVQK…LHFQ) and 194–298 (MSAK…DAFP). One copy of the LRR 1 repeat lies at 148–171 (QRQVKLVNIRNDDITDGNPKLTLG). The residue at position 280 (S280) is a Phosphoserine. LRR repeat units follow at residues 377-399 (LYKLLEVWIEFGRIKLPQGYHPN) and 441-464 (LNCEEKLTLAKNTLQADAAHLESG). The 58-residue stretch at 868–925 (KSTLSVKAICDYRQIEITICKNDECVLEDNSQRTKWKVISPTGNEAMVPSVCFLIPPP) folds into the SH3 domain. Residues 1050–1073 (ISELKNIRLLLEECEQRLLKQIQS) form an LRR 5 repeat. Phosphoserine is present on S1122. LRR repeat units follow at residues 1128 to 1154 (ATTLRSELNLMVEKMDHVYGLSTVYLN), 1187 to 1210 (PADLSALESHRTTLQHWLSDVKDK), and 1257 to 1282 (HRVIAQLETRQSEVESIQEVLRDYRA). 2 positions are modified to phosphoserine: S1367 and S1376. Plectin repeat units lie at residues 1577 to 1619 (LVLL…QLLG), 1654 to 1696 (LKVL…ELQS), 1769 to 1809 (RLLE…CAIL), 1811 to 1848 (RQLQTGGIIDTVTGDRMTIDEAVTNNLVAAKIALVILE), and 1855 to 1885 (GLLLPESGEILPITDALEQGIVSTELAHKIL). S2051, S2077, and S2081 each carry phosphoserine. Basic and acidic residues-rich tracts occupy residues 2120-2131 (KEEQAETLREEN) and 2145-2155 (SEGKDLSTEKS). Residues 2120–2155 (KEEQAETLREENISGDPLLVECPEESEGKDLSTEKS) are disordered. Plectin repeat units follow at residues 2276-2316 (STLS…VKLM), 2352-2393 (NVLM…RILE), 2394-2425 (GQVITGGIVDLKRGKKLSVTLASNLGLVDTAD), 2487-2528 (LLTK…LRKV), and 2671-2715 (LKVL…ASHQ). Disordered regions lie at residues 2806 to 2841 (AGIRGSNGEKAEKGRKISVEMEGQRQDEKASSDSKV), 2951 to 2978 (EMGGEQSVQMSREAAVLSEEESDQEVTI), and 3058 to 3099 (SQET…HISK). The span at 2812-2837 (NGEKAEKGRKISVEMEGQRQDEKASS) shows a compositional bias: basic and acidic residues. The span at 2968–2978 (SEEESDQEVTI) shows a compositional bias: acidic residues. Phosphoserine occurs at positions 3082 and 3085. LRR repeat units lie at residues 3225-3244 (VGQRGPRVLASLLPEKLPTR), 3606-3630 (SGKSSLLCAEPKVDLKDLQGDIQSH), and 3657-3681 (LTALREKLHQAKEQYEVLQERTRVA). Spectrin repeat units follow at residues 3845 to 3920 (ELQK…NFEE) and 3962 to 4070 (QYQQ…ALLQ). S3889 is subject to Phosphoserine. The stretch at 3898-3920 (KGDLRFVTISGQKVLETENNFEE) is one LRR 12 repeat. LRR repeat units lie at residues 4087–4112 (LQSIREVEQNLERDQVASLSSGVIQE) and 4223–4249 (IQELTLAMEDQKENLDTLEHLVTTLGS). The Spectrin 3 repeat unit spans residues 4428–4536 (RMEEVQKEAS…TVARQKQLEE (109 aa)). A phosphoserine mark is found at S4458 and S4483. LRR repeat units lie at residues 4473 to 4496 (KAFLAELEQNSPKIQKVKEALAGL), 4563 to 4583 (GVLGPLSIDPNMLKQQVQFML), and 4728 to 4751 (KKRLETVALPLQGLEDLAADRMNR). A Spectrin 4 repeat occupies 4759 to 4863 (TQQFQQMFDE…KTANRQSRLK (105 aa)). S4921 is subject to Phosphoserine. LRR repeat units lie at residues 5010 to 5035 (NKNLEKLKAQQEVLQALEPQVDYLRN), 5131 to 5153 (NKIQALRFDIEDSEAECRKMLEE), and 5240 to 5263 (KDQVDPLQVKLQQVNGLGQGLIQS). Spectrin repeat units lie at residues 5195–5300 (EDFY…QLQE), 5307–5409 (KFQD…QLED), 5414–5506 (AKQF…ADIT), 5631–5735 (RSQQ…ARLE), 5742–5844 (NQFW…ALDE), 5961–6066 (LAEK…KLED), 6071–6175 (AVQY…HKLE), 6181–6284 (LGQF…QQLQ), 6289–6395 (QAQG…KLEE), 6400–6503 (ATEF…RSLD), 6508–6614 (RAKQ…KLEE), 6621–6722 (QFMD…RLEQ), and 6726–6830 (QAEE…QRLE). At T5394 the chain carries Phosphothreonine. 2 LRR repeats span residues 5654-5678 (MALGPIRLEQDQTTAQLQVQKAFSI) and 5763-5787 (AQLPPPAVDHEQLRQQQEEMRQLRE). A Phosphoserine modification is found at S5988. The residue at position 6166 (K6166) is an N6-acetyllysine. An LRR 23 repeat occupies 6452 to 6475 (RDQIIELDQTGNQLKFLSQKQDVV). The disordered stretch occupies residues 6904–6937 (SVEPTHAPFMEKSRSGSRKSLNQPTPPPMPILSQ). Position 6923 is a phosphoserine (S6923). 2 consecutive EF-hand domains span residues 7001-7036 (HKKSRVMDFFRRIDKDQDGKITRQEFIDGILASKFP) and 7037-7072 (TTKLEMTAVADIFDRDGDGYIDYYEFVAALHPNKDA). Residues D7014, D7016, D7018, K7020, E7025, D7050, D7052, D7054, Y7056, and E7061 each coordinate Ca(2+). The region spanning 7077-7155 (TDADKIEDEV…EFLVKNDPCR (79 aa)) is the GAR domain. Positions 7077–7354 (TDADKIEDEV…ASPRTPGPKR (278 aa)) are C-terminal tail. The interval 7171 to 7354 (PEGASQGMTP…ASPRTPGPKR (184 aa)) is disordered. Residues 7191-7225 (SSRAASPTRSSSSASQSNHSCTSMPSSPATPASGT) are compositionally biased toward low complexity. T7220 carries the post-translational modification Phosphothreonine. Residues 7242–7261 (FHSSRTSLAGDTSNSSSPAS) are compositionally biased toward polar residues. Phosphoserine is present on residues S7245 and S7258. A compositionally biased stretch (low complexity) spans 7276–7290 (SRPGSRAGSRAGSRA). Residues 7279 to 7294 (GSRAGSRAGSRASSRR) are 4 X 4 AA tandem repeats of [GS]-S-R-[AR]. Residues S7296 and S7299 each carry the phosphoserine modification. The segment covering 7305–7315 (ETQSACSDTSE) has biased composition (polar residues). Low complexity predominate over residues 7316-7327 (SSAAGGQGSSRR).

This sequence belongs to the plakin or cytolinker family. In terms of assembly, interacts with AXIN1, LRP6 and GOLGA4. Found in a complex composed of MACF1, APC, AXIN1, CTNNB1 and GSK3B. Interacts with MAPRE1, CLASP1 and CLASP2. Interacts with CAMSAP3. Phosphorylated on serine residues in the C-terminal tail by GSK3B. Phosphorylation inhibits microtubule-binding and this plays a critical role in bulge stem cell migration and skin wound repair. Wnt-signaling can repress phosphorylation. Enriched in the hair follicle stem cells (at protein level). Isoform 1 and isoform 2 are ubiquitous expressed, with higher levels seen in lung, heart, thymus, spleen and brain.

Its subcellular location is the cytoplasm. The protein localises to the cytoskeleton. It is found in the golgi apparatus. The protein resides in the cell membrane. It localises to the cell projection. Its subcellular location is the ruffle membrane. Its function is as follows. F-actin-binding protein which plays a role in cross-linking actin to other cytoskeletal proteins and also binds to microtubules. Plays an important role in ERBB2-dependent stabilization of microtubules at the cell cortex. Acts as a positive regulator of Wnt receptor signaling pathway and is involved in the translocation of AXIN1 and its associated complex (composed of APC, CTNNB1 and GSK3B) from the cytoplasm to the cell membrane. Has actin-regulated ATPase activity and is essential for controlling focal adhesions (FAs) assembly and dynamics. Interaction with CAMSAP3 at the minus ends of non-centrosomal microtubules tethers microtubules minus-ends to actin filaments, regulating focal adhesion size and cell migration. May play role in delivery of transport vesicles containing GPI-linked proteins from the trans-Golgi network through its interaction with GOLGA4. Plays a key role in wound healing and epidermal cell migration. Required for efficient upward migration of bulge cells in response to wounding and this function is primarily rooted in its ability to coordinate microtubule dynamics and polarize hair follicle stem cells. As a regulator of actin and microtubule arrangement and stabilization, it plays an essential role in neurite outgrowth, branching and spine formation during brain development. The sequence is that of Microtubule-actin cross-linking factor 1, isoforms 1/2/3/4 from Mus musculus (Mouse).